Here is a 633-residue protein sequence, read N- to C-terminus: Threonine--tRNA ligase (633 aa).

A TGS domain is found at 1-61 (MINITLPDGS…DHDASLRIIT (61 aa)). The catalytic stretch occupies residues 243–534 (DHRRIGKQQD…LIEHHAGQFP (292 aa)). Residues Cys-334, His-385, and His-511 each coordinate Zn(2+).

It belongs to the class-II aminoacyl-tRNA synthetase family. As to quaternary structure, homodimer. Requires Zn(2+) as cofactor.

It is found in the cytoplasm. It catalyses the reaction tRNA(Thr) + L-threonine + ATP = L-threonyl-tRNA(Thr) + AMP + diphosphate + H(+). Catalyzes the attachment of threonine to tRNA(Thr) in a two-step reaction: L-threonine is first activated by ATP to form Thr-AMP and then transferred to the acceptor end of tRNA(Thr). Also edits incorrectly charged L-seryl-tRNA(Thr). The sequence is that of Threonine--tRNA ligase from Stenotrophomonas maltophilia (strain R551-3).